A 365-amino-acid chain; its full sequence is MTRKYLMIAAGGTGGHMFPAQALAEAMLRKGWRVRLSTDARGARYTGGFPHTTEISQVSSATFARGGILAKAMVAPRIAAGIAATAWEMRRDRPDVVVGFGGYPSIPALGAATLLRLPRMIHEQNGVLGRVNQLFARRVACVACGVWPTDLPEGAQGVHVGNPVRAAVLERAGAAYIPPGPYPMSILVMGGSQGARILSDVVPGAIAALPEELRQYIRVAHQARDEDGARVTEFYAAHGIDAEVQPFFHDVPRRMSEAQLVISRAGASSVADISVIGRPSILIPFAAATGDHQTANARALTGANAAILIPERALDSAALAEQIAAVLTHPDAALQMANAALSTGAPDATERLVGLVEQLAEKETP.

UDP-N-acetyl-alpha-D-glucosamine contacts are provided by residues 13–15 (TGG), N125, R165, S192, and Q293.

It belongs to the glycosyltransferase 28 family. MurG subfamily.

The protein resides in the cell inner membrane. It carries out the reaction di-trans,octa-cis-undecaprenyl diphospho-N-acetyl-alpha-D-muramoyl-L-alanyl-D-glutamyl-meso-2,6-diaminopimeloyl-D-alanyl-D-alanine + UDP-N-acetyl-alpha-D-glucosamine = di-trans,octa-cis-undecaprenyl diphospho-[N-acetyl-alpha-D-glucosaminyl-(1-&gt;4)]-N-acetyl-alpha-D-muramoyl-L-alanyl-D-glutamyl-meso-2,6-diaminopimeloyl-D-alanyl-D-alanine + UDP + H(+). It functions in the pathway cell wall biogenesis; peptidoglycan biosynthesis. Cell wall formation. Catalyzes the transfer of a GlcNAc subunit on undecaprenyl-pyrophosphoryl-MurNAc-pentapeptide (lipid intermediate I) to form undecaprenyl-pyrophosphoryl-MurNAc-(pentapeptide)GlcNAc (lipid intermediate II). The polypeptide is UDP-N-acetylglucosamine--N-acetylmuramyl-(pentapeptide) pyrophosphoryl-undecaprenol N-acetylglucosamine transferase (Ruegeria pomeroyi (strain ATCC 700808 / DSM 15171 / DSS-3) (Silicibacter pomeroyi)).